Here is a 175-residue protein sequence, read N- to C-terminus: E1B protein, small T-antigen (175 aa).

A disordered region spans residues 153-175 (LAEEDEDEEGTTLTTEAEQESSA).

It belongs to the adenoviridae E1B 19 kDa protein family.

The protein is E1B protein, small T-antigen of Mus musculus (Mouse).